The primary structure comprises 110 residues: Large ribosomal subunit protein uL22 (110 aa).

It belongs to the universal ribosomal protein uL22 family. In terms of assembly, part of the 50S ribosomal subunit.

In terms of biological role, this protein binds specifically to 23S rRNA; its binding is stimulated by other ribosomal proteins, e.g. L4, L17, and L20. It is important during the early stages of 50S assembly. It makes multiple contacts with different domains of the 23S rRNA in the assembled 50S subunit and ribosome. The globular domain of the protein is located near the polypeptide exit tunnel on the outside of the subunit, while an extended beta-hairpin is found that lines the wall of the exit tunnel in the center of the 70S ribosome. This is Large ribosomal subunit protein uL22 from Mycoplasmopsis pulmonis (strain UAB CTIP) (Mycoplasma pulmonis).